Here is a 65-residue protein sequence, read N- to C-terminus: UPF0434 protein RPD_0454 (65 aa).

It belongs to the UPF0434 family.

The protein is UPF0434 protein RPD_0454 of Rhodopseudomonas palustris (strain BisB5).